Consider the following 163-residue polypeptide: Sorting nexin-3 (163 aa).

In terms of domain architecture, PX spans 39-162 (VEVRDPRTHF…VRFLQDEVFN (124 aa)). The a 1,2-diacyl-sn-glycero-3-phospho-(1D-myo-inositol-3-phosphate) site is built by Arg-82, Ser-84, Lys-113, Arg-119, and Arg-128.

It belongs to the sorting nexin family.

The protein localises to the cytoplasm. It localises to the golgi apparatus membrane. The protein resides in the prevacuolar compartment membrane. In terms of biological role, required for retention of late Golgi membrane proteins. Component of the retrieval machinery that functions by direct interaction with the cytosolic tails of certain TGN membrane proteins during the sorting/budding process at the prevacuolar compartment. Binds phosphatidylinositol 3-phosphate (PtdIns(P3)). The polypeptide is Sorting nexin-3 (SNX3) (Eremothecium gossypii (strain ATCC 10895 / CBS 109.51 / FGSC 9923 / NRRL Y-1056) (Yeast)).